The following is a 318-amino-acid chain: Transaldolase (318 aa).

Catalysis depends on Lys-126, which acts as the Schiff-base intermediate with substrate.

The protein belongs to the transaldolase family. Type 1 subfamily. Homodimer.

The protein localises to the cytoplasm. It carries out the reaction D-sedoheptulose 7-phosphate + D-glyceraldehyde 3-phosphate = D-erythrose 4-phosphate + beta-D-fructose 6-phosphate. It participates in carbohydrate degradation; pentose phosphate pathway; D-glyceraldehyde 3-phosphate and beta-D-fructose 6-phosphate from D-ribose 5-phosphate and D-xylulose 5-phosphate (non-oxidative stage): step 2/3. Its function is as follows. Transaldolase is important for the balance of metabolites in the pentose-phosphate pathway. In Cupriavidus necator (strain ATCC 17699 / DSM 428 / KCTC 22496 / NCIMB 10442 / H16 / Stanier 337) (Ralstonia eutropha), this protein is Transaldolase.